We begin with the raw amino-acid sequence, 151 residues long: Calcium-binding protein SPEC 2C (151 aa).

EF-hand domains follow at residues 10–45 (EQRK…IEIE), 46–78 (LTQE…KAEQ), 81–116 (GKGA…CTDP), and 118–151 (MTKE…QSSY). Ca(2+) contacts are provided by Asp-23, Asp-25, Asp-27, Lys-29, Glu-34, Asp-59, Asp-61, Ser-63, Glu-70, Asp-94, Asp-96, Ser-98, Ser-100, Glu-105, Asp-131, Asp-135, Glu-137, and Glu-142.

Found in cell lineages giving rise to the aboral ectoderm, a squamous epithelium covering the surface of the late stage embryo and larva.

Calcium-binding protein involved in larval development and metamorphosis. Likely to function as calcium buffers mediating the transport of calcium from the sea water to the blastocoel where calcium is required for skeleton formation. The protein is Calcium-binding protein SPEC 2C (SPEC2C) of Strongylocentrotus purpuratus (Purple sea urchin).